Here is a 650-residue protein sequence, read N- to C-terminus: Threonine--tRNA ligase (650 aa).

Residues 3-65 (DLVKVTLPDG…ERDARLEIVT (63 aa)) enclose the TGS domain. Positions 248-548 (DHRRLGPQLG…LVEHYAGAFP (301 aa)) are catalytic. The Zn(2+) site is built by Cys-349, His-400, and His-525.

The protein belongs to the class-II aminoacyl-tRNA synthetase family. As to quaternary structure, homodimer. Requires Zn(2+) as cofactor.

The protein resides in the cytoplasm. The catalysed reaction is tRNA(Thr) + L-threonine + ATP = L-threonyl-tRNA(Thr) + AMP + diphosphate + H(+). Its function is as follows. Catalyzes the attachment of threonine to tRNA(Thr) in a two-step reaction: L-threonine is first activated by ATP to form Thr-AMP and then transferred to the acceptor end of tRNA(Thr). Also edits incorrectly charged L-seryl-tRNA(Thr). The protein is Threonine--tRNA ligase of Anaeromyxobacter dehalogenans (strain 2CP-1 / ATCC BAA-258).